Consider the following 440-residue polypeptide: ATP-dependent protease ATPase subunit HslU (440 aa).

ATP-binding positions include I18 and 60–65 (GVGKTE). Positions 138-159 (RAQSFDQEDPSAGTRQKLRKKL) are disordered. ATP is bound by residues D252, E318, and R390.

The protein belongs to the ClpX chaperone family. HslU subfamily. A double ring-shaped homohexamer of HslV is capped on each side by a ring-shaped HslU homohexamer. The assembly of the HslU/HslV complex is dependent on binding of ATP.

The protein localises to the cytoplasm. Its function is as follows. ATPase subunit of a proteasome-like degradation complex; this subunit has chaperone activity. The binding of ATP and its subsequent hydrolysis by HslU are essential for unfolding of protein substrates subsequently hydrolyzed by HslV. HslU recognizes the N-terminal part of its protein substrates and unfolds these before they are guided to HslV for hydrolysis. In Alkalilimnicola ehrlichii (strain ATCC BAA-1101 / DSM 17681 / MLHE-1), this protein is ATP-dependent protease ATPase subunit HslU.